Reading from the N-terminus, the 339-residue chain is Uroporphyrinogen decarboxylase (339 aa).

Substrate-binding positions include 21–25, Phe40, Asp71, Tyr147, Ser202, and His315; that span reads RQAGR.

Belongs to the uroporphyrinogen decarboxylase family. As to quaternary structure, homodimer.

It is found in the cytoplasm. It carries out the reaction uroporphyrinogen III + 4 H(+) = coproporphyrinogen III + 4 CO2. It functions in the pathway porphyrin-containing compound metabolism; protoporphyrin-IX biosynthesis; coproporphyrinogen-III from 5-aminolevulinate: step 4/4. Functionally, catalyzes the decarboxylation of four acetate groups of uroporphyrinogen-III to yield coproporphyrinogen-III. The protein is Uroporphyrinogen decarboxylase of Helicobacter pylori (strain J99 / ATCC 700824) (Campylobacter pylori J99).